The chain runs to 206 residues: ATP synthase subunit b (206 aa).

The helical transmembrane segment at 10 to 30 (LLKPFVSTAAICLLVAGTVVL) threads the bilayer.

This sequence belongs to the ATPase B chain family. F-type ATPases have 2 components, F(1) - the catalytic core - and F(0) - the membrane proton channel. F(1) has five subunits: alpha(3), beta(3), gamma(1), delta(1), epsilon(1). F(0) has three main subunits: a(1), b(2) and c(10-14). The alpha and beta chains form an alternating ring which encloses part of the gamma chain. F(1) is attached to F(0) by a central stalk formed by the gamma and epsilon chains, while a peripheral stalk is formed by the delta and b chains.

Its subcellular location is the cell inner membrane. F(1)F(0) ATP synthase produces ATP from ADP in the presence of a proton or sodium gradient. F-type ATPases consist of two structural domains, F(1) containing the extramembraneous catalytic core and F(0) containing the membrane proton channel, linked together by a central stalk and a peripheral stalk. During catalysis, ATP synthesis in the catalytic domain of F(1) is coupled via a rotary mechanism of the central stalk subunits to proton translocation. Its function is as follows. Component of the F(0) channel, it forms part of the peripheral stalk, linking F(1) to F(0). The polypeptide is ATP synthase subunit b (Geobacter sulfurreducens (strain ATCC 51573 / DSM 12127 / PCA)).